Here is a 417-residue protein sequence, read N- to C-terminus: Serine hydroxymethyltransferase (417 aa).

(6S)-5,6,7,8-tetrahydrofolate contacts are provided by residues leucine 122 and 126-128 (GHL). N6-(pyridoxal phosphate)lysine is present on lysine 231.

Belongs to the SHMT family. In terms of assembly, homodimer. Pyridoxal 5'-phosphate serves as cofactor.

It localises to the cytoplasm. The catalysed reaction is (6R)-5,10-methylene-5,6,7,8-tetrahydrofolate + glycine + H2O = (6S)-5,6,7,8-tetrahydrofolate + L-serine. The protein operates within one-carbon metabolism; tetrahydrofolate interconversion. It participates in amino-acid biosynthesis; glycine biosynthesis; glycine from L-serine: step 1/1. Catalyzes the reversible interconversion of serine and glycine with tetrahydrofolate (THF) serving as the one-carbon carrier. This reaction serves as the major source of one-carbon groups required for the biosynthesis of purines, thymidylate, methionine, and other important biomolecules. Also exhibits THF-independent aldolase activity toward beta-hydroxyamino acids, producing glycine and aldehydes, via a retro-aldol mechanism. The protein is Serine hydroxymethyltransferase of Caldicellulosiruptor saccharolyticus (strain ATCC 43494 / DSM 8903 / Tp8T 6331).